A 442-amino-acid chain; its full sequence is MALMVVGLSHRTASLEVLERAAFDARGAEEVLRALTASPHVEEAFVLSTCNRVELYCDVSRFHGGVADIGDVLCRRIGRGLDELGDQLYVHYEDAGVEHLFKVACGLDSMAVGESQILGQLRLALRGLHERGLAGGTLDRLLQTALRVGKRAHSETRLDAAGASLVDTAMTRAAGVVGELPGRRALVVGAGAMSALVATTLARAGLDVVVANRTPDRAQRLAAAVGGRATGLDDLRAEVAAADLVVSCTGAVGHVLDVATVASALLDRPERPLFLADLALPRDVHPDVATLRGAHLVDLEGLGADLASSAVAQDLRAVRAIVAEEVAAHAASLRAADVAPTVVALRAQARHVVEVEMRRLASRVDLDDTTRSEVDRAVHRIVEKLLHTPTVRVKELAEAPGGVGYAAALRALFDLEVTAQGGALPGDAPLSGTVADAVGHVS.

Substrate-binding positions include 49-52, serine 109, 114-116, and glutamine 120; these read TCNR and ESQ. The active-site Nucleophile is cysteine 50. An NADP(+)-binding site is contributed by 189-194; the sequence is GAGAMS.

Belongs to the glutamyl-tRNA reductase family. As to quaternary structure, homodimer.

It carries out the reaction (S)-4-amino-5-oxopentanoate + tRNA(Glu) + NADP(+) = L-glutamyl-tRNA(Glu) + NADPH + H(+). It participates in porphyrin-containing compound metabolism; protoporphyrin-IX biosynthesis; 5-aminolevulinate from L-glutamyl-tRNA(Glu): step 1/2. Catalyzes the NADPH-dependent reduction of glutamyl-tRNA(Glu) to glutamate 1-semialdehyde (GSA). This is Glutamyl-tRNA reductase from Kineococcus radiotolerans (strain ATCC BAA-149 / DSM 14245 / SRS30216).